The sequence spans 280 residues: Undecaprenyl-diphosphatase (280 aa).

8 helical membrane passes run 3 to 23 (IILL…EFLP), 45 to 65 (VDLF…YDYW), 88 to 108 (QLGL…FTFA), 115 to 135 (LFNP…IFYV), 150 to 170 (VSLK…IPGT), 191 to 211 (AEFS…LDFI), 225 to 245 (VLGI…RLLV), and 255 to 275 (IFAW…WGFG).

The protein belongs to the UppP family.

Its subcellular location is the cell inner membrane. It catalyses the reaction di-trans,octa-cis-undecaprenyl diphosphate + H2O = di-trans,octa-cis-undecaprenyl phosphate + phosphate + H(+). Its function is as follows. Catalyzes the dephosphorylation of undecaprenyl diphosphate (UPP). Confers resistance to bacitracin. The polypeptide is Undecaprenyl-diphosphatase (Psychrobacter cryohalolentis (strain ATCC BAA-1226 / DSM 17306 / VKM B-2378 / K5)).